The primary structure comprises 542 residues: CTP synthase (542 aa).

The interval 1-265 (MARYVFITGG…DDEVLAAFGI (265 aa)) is amidoligase domain. CTP is bound at residue Ser-13. Ser-13 lines the UTP pocket. ATP is bound by residues 14 to 19 (SLGKGI) and Asp-71. 2 residues coordinate Mg(2+): Asp-71 and Glu-139. Residues 146–148 (DIE), 186–191 (KTKPTQ), and Lys-222 each bind CTP. UTP contacts are provided by residues 186–191 (KTKPTQ) and Lys-222. The 251-residue stretch at 291–541 (TIAIVGKYTG…IEAATEQSRL (251 aa)) folds into the Glutamine amidotransferase type-1 domain. Gly-353 lines the L-glutamine pocket. Cys-380 (nucleophile; for glutamine hydrolysis) is an active-site residue. Residues 381 to 384 (FGMQ), Glu-404, and Arg-469 each bind L-glutamine. Residues His-514 and Glu-516 contribute to the active site.

It belongs to the CTP synthase family. Homotetramer.

It catalyses the reaction UTP + L-glutamine + ATP + H2O = CTP + L-glutamate + ADP + phosphate + 2 H(+). The enzyme catalyses L-glutamine + H2O = L-glutamate + NH4(+). It carries out the reaction UTP + NH4(+) + ATP = CTP + ADP + phosphate + 2 H(+). The protein operates within pyrimidine metabolism; CTP biosynthesis via de novo pathway; CTP from UDP: step 2/2. With respect to regulation, allosterically activated by GTP, when glutamine is the substrate; GTP has no effect on the reaction when ammonia is the substrate. The allosteric effector GTP functions by stabilizing the protein conformation that binds the tetrahedral intermediate(s) formed during glutamine hydrolysis. Inhibited by the product CTP, via allosteric rather than competitive inhibition. Catalyzes the ATP-dependent amination of UTP to CTP with either L-glutamine or ammonia as the source of nitrogen. Regulates intracellular CTP levels through interactions with the four ribonucleotide triphosphates. This is CTP synthase from Rhizobium etli (strain CIAT 652).